The chain runs to 275 residues: Bifunctional protein FolD (275 aa).

NADP(+) contacts are provided by residues 161–163, serine 186, and threonine 227; that span reads GRS.

Belongs to the tetrahydrofolate dehydrogenase/cyclohydrolase family. As to quaternary structure, homodimer.

It carries out the reaction (6R)-5,10-methylene-5,6,7,8-tetrahydrofolate + NADP(+) = (6R)-5,10-methenyltetrahydrofolate + NADPH. The enzyme catalyses (6R)-5,10-methenyltetrahydrofolate + H2O = (6R)-10-formyltetrahydrofolate + H(+). It participates in one-carbon metabolism; tetrahydrofolate interconversion. Functionally, catalyzes the oxidation of 5,10-methylenetetrahydrofolate to 5,10-methenyltetrahydrofolate and then the hydrolysis of 5,10-methenyltetrahydrofolate to 10-formyltetrahydrofolate. The sequence is that of Bifunctional protein FolD from Parafrankia sp. (strain EAN1pec).